Here is a 155-residue protein sequence, read N- to C-terminus: Putative pre-16S rRNA nuclease (155 aa).

The segment at 136–155 (DAERATSRPPGHPVEPRIGP) is disordered.

This sequence belongs to the YqgF nuclease family.

It is found in the cytoplasm. Could be a nuclease involved in processing of the 5'-end of pre-16S rRNA. This chain is Putative pre-16S rRNA nuclease, found in Leifsonia xyli subsp. xyli (strain CTCB07).